Consider the following 408-residue polypeptide: Phosphoglycerate kinase (408 aa).

Substrate is bound by residues 24–26 (DLN), R39, 62–65 (HLGR), R121, and R161. ATP is bound by residues K211, G307, E338, and 364 to 367 (GGDS).

It belongs to the phosphoglycerate kinase family. Monomer.

The protein localises to the cytoplasm. The enzyme catalyses (2R)-3-phosphoglycerate + ATP = (2R)-3-phospho-glyceroyl phosphate + ADP. Its pathway is carbohydrate degradation; glycolysis; pyruvate from D-glyceraldehyde 3-phosphate: step 2/5. The polypeptide is Phosphoglycerate kinase (Paenarthrobacter aurescens (strain TC1)).